A 261-amino-acid polypeptide reads, in one-letter code: 5'-nucleotidase SurE (261 aa).

A divalent metal cation contacts are provided by D8, D9, S43, and N96.

It belongs to the SurE nucleotidase family. A divalent metal cation is required as a cofactor.

The protein resides in the cytoplasm. It catalyses the reaction a ribonucleoside 5'-phosphate + H2O = a ribonucleoside + phosphate. Its function is as follows. Nucleotidase that shows phosphatase activity on nucleoside 5'-monophosphates. This Cereibacter sphaeroides (strain ATCC 17023 / DSM 158 / JCM 6121 / CCUG 31486 / LMG 2827 / NBRC 12203 / NCIMB 8253 / ATH 2.4.1.) (Rhodobacter sphaeroides) protein is 5'-nucleotidase SurE.